Here is a 478-residue protein sequence, read N- to C-terminus: Cytochrome c-552 (478 aa).

The N-terminal stretch at 1–26 (MARKTLRARRFFSLIFPFFFITSVYA) is a signal peptide. His94 serves as a coordination point for heme c. Heme is bound by residues Cys122, Cys125, and Lys126. Heme c is bound by residues Cys160, Cys163, His164, Cys209, Cys212, and His213. Ca(2+) is bound by residues Glu215, Tyr216, Lys261, and Gln263. Tyr216 serves as a coordination point for substrate. His264 serves as a coordination point for substrate. The heme c site is built by His275, Cys282, Cys285, His286, His301, Cys314, Cys317, His318, and His393.

This sequence belongs to the cytochrome c-552 family. It depends on Ca(2+) as a cofactor. Requires heme c as cofactor.

It is found in the periplasm. It catalyses the reaction 6 Fe(III)-[cytochrome c] + NH4(+) + 2 H2O = 6 Fe(II)-[cytochrome c] + nitrite + 8 H(+). The protein operates within nitrogen metabolism; nitrate reduction (assimilation). Its function is as follows. Catalyzes the reduction of nitrite to ammonia, consuming six electrons in the process. This is Cytochrome c-552 from Salmonella schwarzengrund (strain CVM19633).